A 165-amino-acid polypeptide reads, in one-letter code: Growth arrest and DNA damage-inducible protein GADD45 alpha (165 aa).

T2 is modified (phosphothreonine).

This sequence belongs to the GADD45 family. As to quaternary structure, interacts with AURKA, PCNA, GADD45GIP1 and MAPK14.

It is found in the nucleus. Functionally, might affect PCNA interaction with some CDK (cell division protein kinase) complexes; stimulates DNA excision repair in vitro and inhibits entry of cells into S phase. In T-cells, functions as a regulator of p38 MAPKs by inhibiting p88 phosphorylation and activity. In Felis catus (Cat), this protein is Growth arrest and DNA damage-inducible protein GADD45 alpha (GADD45A).